The chain runs to 103 residues: Small ribosomal subunit protein uS10 (103 aa).

The protein belongs to the universal ribosomal protein uS10 family. As to quaternary structure, part of the 30S ribosomal subunit.

Its function is as follows. Involved in the binding of tRNA to the ribosomes. This chain is Small ribosomal subunit protein uS10, found in Clostridioides difficile (strain 630) (Peptoclostridium difficile).